Reading from the N-terminus, the 781-residue chain is Lon protease (781 aa).

In terms of domain architecture, Lon N-terminal spans 16–214; it reads ANVLVTRGIV…KILSFTIDER (199 aa). 365-372 serves as a coordination point for ATP; it reads GPPGVGKT. The Lon proteolytic domain occupies 601-781; the sequence is EYMPGVVNGM…YDDVYNRLFK (181 aa). Active-site residues include Ser-688 and Lys-731.

It belongs to the peptidase S16 family. Homohexamer. Organized in a ring with a central cavity.

Its subcellular location is the cytoplasm. It carries out the reaction Hydrolysis of proteins in presence of ATP.. Its function is as follows. ATP-dependent serine protease that mediates the selective degradation of mutant and abnormal proteins as well as certain short-lived regulatory proteins. Required for cellular homeostasis and for survival from DNA damage and developmental changes induced by stress. Degrades polypeptides processively to yield small peptide fragments that are 5 to 10 amino acids long. Binds to DNA in a double-stranded, site-specific manner. This chain is Lon protease, found in Malacoplasma penetrans (strain HF-2) (Mycoplasma penetrans).